The following is a 357-amino-acid chain: Neurogenic differentiation factor 1 (357 aa).

Residues 1-94 (MTKSYSESGL…GPKKKKMTKA (94 aa)) are disordered. Residues 58–78 (EEEDEDEDLEEEEEEEEEEDD) are compositionally biased toward acidic residues. The span at 81–93 (PKRRGPKKKKMTK) shows a compositional bias: basic residues. The Nuclear localization signal motif lies at 87–93 (KKKKMTK). Positions 101-153 (LRRMKANARERNRMHGLNAALDNLRKVVPCYSKTQKLSKIETLRLAKNYIWAL) constitute a bHLH domain. A phosphoserine mark is found at Ser-162, Ser-259, Ser-266, and Ser-274. Residue Ser-336 is modified to Phosphoserine; by CaMK2.

As to quaternary structure, efficient DNA-binding requires dimerization with another bHLH protein. Heterodimer with TCF3/E47; the heterodimer is inhibited in presence of ID2, but not NR0B2, to E-box element. Interacts with EP300; the interaction is inhibited by NR0B2. Interacts with RREB1. Interacts with ATOH8. Post-translationally, phosphorylated by MAPK1; phosphorylation regulates heterodimerization and DNA-binding activities. Phosphorylation on Ser-266 and Ser-274 increases transactivation on the insulin promoter in glucose-stimulated insulinoma cells. Phosphorylated. In islet cells, phosphorylated on Ser-274 upon glucose stimulation; which may be required for nuclear localization. In activated neurons, phosphorylated on Ser-336 by CaMK2; which promotes dendritic growth.

The protein localises to the cytoplasm. Its subcellular location is the nucleus. Functionally, acts as a transcriptional activator: mediates transcriptional activation by binding to E box-containing promoter consensus core sequences 5'-CANNTG-3'. Associates with the p300/CBP transcription coactivator complex to stimulate transcription of the secretin gene as well as the gene encoding the cyclin-dependent kinase inhibitor CDKN1A. Contributes to the regulation of several cell differentiation pathways, like those that promote the formation of early retinal ganglion cells, inner ear sensory neurons, granule cells forming either the cerebellum or the dentate gyrus cell layer of the hippocampus, endocrine islet cells of the pancreas and enteroendocrine cells of the small intestine. Together with PAX6 or SIX3, is required for the regulation of amacrine cell fate specification. Also required for dendrite morphogenesis and maintenance in the cerebellar cortex. Associates with chromatin to enhancer regulatory elements in genes encoding key transcriptional regulators of neurogenesis. The chain is Neurogenic differentiation factor 1 (Neurod1) from Rattus norvegicus (Rat).